The sequence spans 505 residues: Cysteine--tRNA ligase (505 aa).

Cys-33 contributes to the Zn(2+) binding site. Residues 35–45 carry the 'HIGH' region motif; that stretch reads PTVYDFAHIGN. Zn(2+) is bound by residues Cys-229, His-268, and Glu-272. Residues 301-305 carry the 'KMSKS' region motif; it reads KMSKS. An ATP-binding site is contributed by Lys-304.

The protein belongs to the class-I aminoacyl-tRNA synthetase family. Monomer. Zn(2+) serves as cofactor.

Its subcellular location is the cytoplasm. It catalyses the reaction tRNA(Cys) + L-cysteine + ATP = L-cysteinyl-tRNA(Cys) + AMP + diphosphate. This chain is Cysteine--tRNA ligase, found in Brucella anthropi (strain ATCC 49188 / DSM 6882 / CCUG 24695 / JCM 21032 / LMG 3331 / NBRC 15819 / NCTC 12168 / Alc 37) (Ochrobactrum anthropi).